The primary structure comprises 130 residues: Small ribosomal subunit protein bS6 (130 aa).

The interval 96 to 130 (VTEASPMAKARDERDSRRSPSDDRIEEESAEENAE) is disordered. Residues 104-118 (KARDERDSRRSPSDD) show a composition bias toward basic and acidic residues. Acidic residues predominate over residues 119 to 130 (RIEEESAEENAE).

This sequence belongs to the bacterial ribosomal protein bS6 family.

Binds together with bS18 to 16S ribosomal RNA. The protein is Small ribosomal subunit protein bS6 of Shewanella denitrificans (strain OS217 / ATCC BAA-1090 / DSM 15013).